The primary structure comprises 568 residues: Autophagy-related protein 17 (568 aa).

Disordered stretches follow at residues 1 to 59 (MASF…DSSE) and 522 to 568 (SYEM…ERPF). Residues 522–546 (SYEMEAHGEPENEGKVETAYERETE) show a composition bias toward basic and acidic residues.

This sequence belongs to the ATG17 family.

Its subcellular location is the cytoplasm. The protein resides in the preautophagosomal structure membrane. In terms of biological role, autophagy-specific protein that functions in response to autophagy-inducing signals as a scaffold to recruit other ATG proteins to organize pre-autophagosomal structure (PAS) formation. Modulates the timing and magnitude of the autophagy response, such as the size of the sequestering vesicles. Plays particularly a role in pexophagy and nucleophagy. In Neurospora crassa (strain ATCC 24698 / 74-OR23-1A / CBS 708.71 / DSM 1257 / FGSC 987), this protein is Autophagy-related protein 17 (apg-9).